The primary structure comprises 260 residues: Histone H2A.v1 (260 aa).

2 disordered regions span residues 65 to 122 (VVQT…KQKS) and 236 to 260 (KKKG…SSKN). The segment covering 67–110 (QTNNKTNNKNNINNNNNNNNNNNNNNINNNNKNNKVKKTTTTTK) has biased composition (low complexity). 2 stretches are compositionally biased toward basic and acidic residues: residues 111-121 (KNNEKSNEKQK) and 248-260 (DISK…SSKN).

It belongs to the histone H2A family.

The chain is Histone H2A.v1 (H2Av1) from Dictyostelium discoideum (Social amoeba).